The sequence spans 314 residues: MSKKAEEIQAKQSLEKENSNFSKTGYSNSRLNRHIMYTPEPKLHFDAMTIVGNLNKNNAHKLSEFMSIAPQIRLWDILQTKFKAKALQEKVYIEYDKVKADAWDRRNMRVEFNPNKLTHEEMLWLKQNIIDYMEDDGFTRLDLAFDFEDDLSDYYAMTDKSVKKTIFYGRNGKPETKYFGVRDSDRFIRIYNKKQERKDNADIEVMSEHLWRVEIELKRDMVDYWNDCFNDLHILKPDWSSLEKVKDQAMIYMLIHEESTWGKLERRTKNKYREMLKSISEIDLTDLMKLTLKENEKQLQKQIEFWQREFRFWE.

Basic and acidic residues predominate over residues 1 to 18 (MSKKAEEIQAKQSLEKEN). The tract at residues 1–25 (MSKKAEEIQAKQSLEKENSNFSKTG) is disordered.

Belongs to the plasmid replication initiation factor family.

In terms of biological role, this protein is probably a specific topoisomerase involved in initiating replication. This protein is specifically required and may be rate-limiting for replication of the plasmid in vivo. The polypeptide is Replication initiation protein (repE) (Staphylococcus aureus).